The primary structure comprises 427 residues: Serine--tRNA ligase (427 aa).

Residue Thr-233–Glu-235 participates in L-serine binding. Arg-264 to Glu-266 contacts ATP. Glu-287 is an L-serine binding site. An ATP-binding site is contributed by Glu-351–Ser-354. Ser-387 serves as a coordination point for L-serine.

This sequence belongs to the class-II aminoacyl-tRNA synthetase family. Type-1 seryl-tRNA synthetase subfamily. In terms of assembly, homodimer. The tRNA molecule binds across the dimer.

It is found in the cytoplasm. The catalysed reaction is tRNA(Ser) + L-serine + ATP = L-seryl-tRNA(Ser) + AMP + diphosphate + H(+). It carries out the reaction tRNA(Sec) + L-serine + ATP = L-seryl-tRNA(Sec) + AMP + diphosphate + H(+). It participates in aminoacyl-tRNA biosynthesis; selenocysteinyl-tRNA(Sec) biosynthesis; L-seryl-tRNA(Sec) from L-serine and tRNA(Sec): step 1/1. Its function is as follows. Catalyzes the attachment of serine to tRNA(Ser). Is also able to aminoacylate tRNA(Sec) with serine, to form the misacylated tRNA L-seryl-tRNA(Sec), which will be further converted into selenocysteinyl-tRNA(Sec). The chain is Serine--tRNA ligase from Buchnera aphidicola subsp. Schizaphis graminum (strain Sg).